Consider the following 219-residue polypeptide: Sporamin A (219 aa).

The signal sequence occupies residues 1-23 (MKALTLALFLALSLYLLPNPAHS).

It belongs to the protease inhibitor I3 (leguminous Kunitz-type inhibitor) family. As to expression, accumulates specifically in tuberous roots and tubers upon tuberization. Sporamin accounts 60 to 80% of the total soluble protein of the organ.

Its subcellular location is the vacuole. Functionally, major tuberous root protein. This chain is Sporamin A (GSPO-A1), found in Ipomoea batatas (Sweet potato).